Consider the following 188-residue polypeptide: Elongation factor P (188 aa).

This sequence belongs to the elongation factor P family.

The protein localises to the cytoplasm. The protein operates within protein biosynthesis; polypeptide chain elongation. In terms of biological role, involved in peptide bond synthesis. Stimulates efficient translation and peptide-bond synthesis on native or reconstituted 70S ribosomes in vitro. Probably functions indirectly by altering the affinity of the ribosome for aminoacyl-tRNA, thus increasing their reactivity as acceptors for peptidyl transferase. In Parabacteroides distasonis (strain ATCC 8503 / DSM 20701 / CIP 104284 / JCM 5825 / NCTC 11152), this protein is Elongation factor P.